The primary structure comprises 311 residues: p-hydroxybenzoic acid efflux pump subunit AaeA (311 aa).

A helical transmembrane segment spans residues 11 to 31 (VGITVLVVVLAVIAIFNVWAF).

Belongs to the membrane fusion protein (MFP) (TC 8.A.1) family.

It is found in the cell inner membrane. In terms of biological role, forms an efflux pump with AaeB. The protein is p-hydroxybenzoic acid efflux pump subunit AaeA of Yersinia pseudotuberculosis serotype O:1b (strain IP 31758).